Here is a 1181-residue protein sequence, read N- to C-terminus: WD repeat-containing protein 35 (1181 aa).

6 WD repeats span residues 4-43, 61-100, 105-143, 147-185, 193-241, and 246-288; these read YLSK…VLKL, LSMN…VWML, WIEE…IVGS, NRIW…IYDN, MKLS…IMRH, and NPVL…IVQF.

Component of the IFT complex A (IFT-A) complex. IFT-A complex is divided into a core subcomplex composed of IFT122:IFT140:WDR19 which is associated with TULP3 and a peripheral subcomplex composed of IFT43:WDR35:TTC21B. Interacts directy with IFT122, ITF43 and TTC21B. Interacts with IFT43. Interacts with CFAP61.

It localises to the cytoplasm. Its subcellular location is the cytoskeleton. It is found in the microtubule organizing center. The protein resides in the centrosome. The protein localises to the cilium axoneme. It localises to the cilium basal body. In terms of biological role, as a component of the IFT complex A (IFT-A), a complex required for retrograde ciliary transport and entry into cilia of G protein-coupled receptors (GPCRs), it is involved in ciliogenesis and ciliary protein trafficking. May promote CASP3 activation and TNF-stimulated apoptosis. This chain is WD repeat-containing protein 35, found in Homo sapiens (Human).